A 1029-amino-acid chain; its full sequence is DNA repair protein RAD5A (1029 aa).

The disordered stretch occupies residues 83–104 (SVGANHRVEEENESVNGGGEES). The region spanning 406 to 622 (PSTLQMARGG…YSLLRFLRIE (217 aa)) is the Helicase ATP-binding domain. An ATP-binding site is contributed by 419-426 (DAMGLGKT). Residues 573–576 (DEAH) carry the DEAH box motif. The RING-type zinc-finger motif lies at 794–834 (CPICLEALEDAVLTPCAHRLCRECLLASWRNSTSGLCPVCR). The region spanning 864–1029 (KITALLEELE…RIEELKMLFT (166 aa)) is the Helicase C-terminal domain.

The protein belongs to the SNF2/RAD54 helicase family. RAD16 subfamily.

It is found in the nucleus. Functionally, functions in error-free postreplication DNA repair or DNA-damage tolerance (DTT) pathway. Required for homologous recombination (HR) induced by DNA double-strand break (DSB) in somatic cells. Required for damage-induced DNA repair, independently of MUS81 and RECQL4A. Plays a role in synthesis-dependent strand annealing (SDSA) but not in single-strand annealing (SSA). Possesses double-stranded DNA-dependent ATPase activity. Is able to regress replication forks with preference for forks with a leading strand gap. Is able to catalyze branch migration of Holliday junctions and is unaffected by protein blockades. This chain is DNA repair protein RAD5A, found in Arabidopsis thaliana (Mouse-ear cress).